The sequence spans 176 residues: Endoribonuclease YbeY (176 aa).

Residues H139, H143, and H149 each coordinate Zn(2+).

This sequence belongs to the endoribonuclease YbeY family. Zn(2+) is required as a cofactor.

It localises to the cytoplasm. Its function is as follows. Single strand-specific metallo-endoribonuclease involved in late-stage 70S ribosome quality control and in maturation of the 3' terminus of the 16S rRNA. This chain is Endoribonuclease YbeY, found in Acaryochloris marina (strain MBIC 11017).